The following is a 218-amino-acid chain: Small ribosomal subunit protein uS3c (218 aa).

One can recognise a KH type-2 domain in the interval 47–118 (VQKHMRISSG…RLNIAIARVA (72 aa)).

It belongs to the universal ribosomal protein uS3 family. As to quaternary structure, part of the 30S ribosomal subunit.

It localises to the plastid. It is found in the chloroplast. The protein is Small ribosomal subunit protein uS3c (rps3) of Nymphaea alba (White water-lily).